The primary structure comprises 702 residues: Polyribonucleotide nucleotidyltransferase (702 aa).

Mg(2+)-binding residues include Asp-485 and Asp-491. Positions 552 to 612 constitute a KH domain; sequence PRTEIICIDP…EGVKKAISII (61 aa). The region spanning 622–690 is the S1 motif domain; the sequence is GEIYLGKVTK…NQGRINLSRK (69 aa).

Belongs to the polyribonucleotide nucleotidyltransferase family. Mg(2+) serves as cofactor.

The protein resides in the cytoplasm. It carries out the reaction RNA(n+1) + phosphate = RNA(n) + a ribonucleoside 5'-diphosphate. Functionally, involved in mRNA degradation. Catalyzes the phosphorolysis of single-stranded polyribonucleotides processively in the 3'- to 5'-direction. The sequence is that of Polyribonucleotide nucleotidyltransferase from Clostridium botulinum (strain 657 / Type Ba4).